Reading from the N-terminus, the 461-residue chain is Photosystem II CP43 reaction center protein (461 aa).

Positions methionine 1–glutamate 2 are excised as a propeptide. Threonine 3 is subject to N-acetylthreonine. Threonine 3 is modified (phosphothreonine). Helical transmembrane passes span leucine 57 to alanine 81, leucine 122 to asparagine 143, lysine 166 to threonine 188, glutamine 243 to serine 263, and tryptophan 279 to serine 300. A [CaMn4O5] cluster-binding site is contributed by glutamate 355. A helical transmembrane segment spans residues arginine 435 to proline 459.

Belongs to the PsbB/PsbC family. PsbC subfamily. As to quaternary structure, PSII is composed of 1 copy each of membrane proteins PsbA, PsbB, PsbC, PsbD, PsbE, PsbF, PsbH, PsbI, PsbJ, PsbK, PsbL, PsbM, PsbT, PsbX, PsbY, PsbZ, Psb30/Ycf12, at least 3 peripheral proteins of the oxygen-evolving complex and a large number of cofactors. It forms dimeric complexes. Binds multiple chlorophylls and provides some of the ligands for the Ca-4Mn-5O cluster of the oxygen-evolving complex. It may also provide a ligand for a Cl- that is required for oxygen evolution. PSII binds additional chlorophylls, carotenoids and specific lipids. serves as cofactor.

It is found in the plastid. Its subcellular location is the chloroplast thylakoid membrane. In terms of biological role, one of the components of the core complex of photosystem II (PSII). It binds chlorophyll and helps catalyze the primary light-induced photochemical processes of PSII. PSII is a light-driven water:plastoquinone oxidoreductase, using light energy to abstract electrons from H(2)O, generating O(2) and a proton gradient subsequently used for ATP formation. This is Photosystem II CP43 reaction center protein from Stigeoclonium helveticum (Green alga).